The following is a 287-amino-acid chain: 2-dehydro-3-deoxyphosphooctonate aldolase (287 aa).

Belongs to the KdsA family.

The protein resides in the cytoplasm. It carries out the reaction D-arabinose 5-phosphate + phosphoenolpyruvate + H2O = 3-deoxy-alpha-D-manno-2-octulosonate-8-phosphate + phosphate. The protein operates within carbohydrate biosynthesis; 3-deoxy-D-manno-octulosonate biosynthesis; 3-deoxy-D-manno-octulosonate from D-ribulose 5-phosphate: step 2/3. It participates in bacterial outer membrane biogenesis; lipopolysaccharide biosynthesis. The protein is 2-dehydro-3-deoxyphosphooctonate aldolase of Bradyrhizobium sp. (strain ORS 278).